The chain runs to 253 residues: Tetraspanin-11 (253 aa).

The next 4 membrane-spanning stretches (helical) occupy residues 19–39 (LLFI…AVGI), 63–83 (VLIF…GAII), 93–113 (YFCL…LAHV), and 220–240 (LLLM…GMVL).

It belongs to the tetraspanin (TM4SF) family.

The protein resides in the membrane. The chain is Tetraspanin-11 (Tspan11) from Rattus norvegicus (Rat).